The following is a 1087-amino-acid chain: Ubiquitin-associated protein 2-like (1087 aa).

At Met1 the chain carries N-acetylmethionine. The disordered stretch occupies residues Met1–Ala33. Residues Asp49–Gly89 form the UBA domain. Positions Asp92 to Thr234 are disordered. Over residues Glu118–Arg132 the composition is skewed to basic and acidic residues. Over residues Arg133–Ser145 the composition is skewed to basic residues. An asymmetric dimethylarginine mark is found at Arg187 and Arg190. The segment covering Asn213–Gly226 has biased composition (low complexity). 2 positions are modified to phosphoserine: Ser356 and Ser360. A compositionally biased stretch (low complexity) spans Ala377–Ser389. The tract at residues Ala377–Lys420 is disordered. A compositionally biased stretch (polar residues) spans Trp390 to Leu401. Residues Ser410 and Ser416 each carry the phosphoserine modification. Residue Thr425 is modified to Phosphothreonine. Phosphoserine occurs at positions 439, 454, 467, 470, 471, and 477. Disordered regions lie at residues Pro440–Ser493, Ser530–Leu656, and Thr669–Gly794. Composition is skewed to low complexity over residues Gln474 to Leu485 and Ser534 to Ser569. Positions Gly570–Leu656 are enriched in polar residues. Residues Ser604, Ser605, Ser608, and Ser609 each carry the phosphoserine modification. A compositionally biased stretch (low complexity) spans Thr688–Ser784. Phosphoserine is present on residues Ser852 and Ser859. Residues Phe865–Ala901 are disordered. Positions Pro873–Thr896 are enriched in low complexity. An omega-N-methylarginine mark is found at Ser962 and Val969. 2 positions are modified to N6-acetyllysine: Val969 and Thr976. Residues Gln1040–Asn1087 are disordered. Over residues Gln1053–Ser1067 the composition is skewed to low complexity. Residues Ile1068–Asn1087 show a composition bias toward polar residues.

In terms of assembly, interacts with BMI1. Part of a complex consisting of UBAP2L, BMI1 and RNF2. Interacts with G3BP1 (via NTF2 domain); promoting stress granule formation. Post-translationally, acetylated. Ubiquitous.

Its subcellular location is the nucleus. The protein localises to the chromosome. The protein resides in the cytoplasm. It localises to the stress granule. Its function is as follows. Recruits the ubiquitination machinery to RNA polymerase II for polyubiquitination, removal and degradation, when the transcription-coupled nucleotide excision repair (TC-NER) machinery fails to resolve DNA damage. Plays an important role in the activity of long-term repopulating hematopoietic stem cells (LT-HSCs). Is a regulator of stress granule assembly, required for their efficient formation. Required for proper brain development and neocortex lamination. The sequence is that of Ubiquitin-associated protein 2-like from Homo sapiens (Human).